Reading from the N-terminus, the 287-residue chain is Proteasome subunit alpha (287 aa).

Residues 241-287 (GVVAGEEPHTAAHAPSVPQPGAPAGLGDPGAPDTGGTAGSGGEAPTT) are disordered. The span at 262–275 (APAGLGDPGAPDTG) shows a compositional bias: low complexity. The span at 276–287 (GTAGSGGEAPTT) shows a compositional bias: gly residues.

It belongs to the peptidase T1A family. As to quaternary structure, the 20S proteasome core is composed of 14 alpha and 14 beta subunits that assemble into four stacked heptameric rings, resulting in a barrel-shaped structure. The two inner rings, each composed of seven catalytic beta subunits, are sandwiched by two outer rings, each composed of seven alpha subunits. The catalytic chamber with the active sites is on the inside of the barrel. Has a gated structure, the ends of the cylinder being occluded by the N-termini of the alpha-subunits. Is capped by the proteasome-associated ATPase, ARC.

The protein localises to the cytoplasm. It participates in protein degradation; proteasomal Pup-dependent pathway. The formation of the proteasomal ATPase ARC-20S proteasome complex, likely via the docking of the C-termini of ARC into the intersubunit pockets in the alpha-rings, may trigger opening of the gate for substrate entry. Interconversion between the open-gate and close-gate conformations leads to a dynamic regulation of the 20S proteasome proteolysis activity. Its function is as follows. Component of the proteasome core, a large protease complex with broad specificity involved in protein degradation. This chain is Proteasome subunit alpha, found in Geodermatophilus obscurus (strain ATCC 25078 / DSM 43160 / JCM 3152 / CCUG 61914 / KCC A-0152 / KCTC 9177 / NBRC 13315 / NRRL B-3577 / G-20).